Reading from the N-terminus, the 246-residue chain is NH(3)-dependent NAD(+) synthetase (246 aa).

29 to 36 (GLSGGIDS) contacts ATP. Asp-35 lines the Mg(2+) pocket. A deamido-NAD(+)-binding site is contributed by Arg-110. ATP is bound at residue Thr-130. Glu-135 provides a ligand contact to Mg(2+). ATP-binding residues include Lys-159 and Ser-181.

The protein belongs to the NAD synthetase family. Homodimer.

It carries out the reaction deamido-NAD(+) + NH4(+) + ATP = AMP + diphosphate + NAD(+) + H(+). Its pathway is cofactor biosynthesis; NAD(+) biosynthesis; NAD(+) from deamido-NAD(+) (ammonia route): step 1/1. Its function is as follows. Catalyzes the ATP-dependent amidation of deamido-NAD to form NAD. Uses ammonia as a nitrogen source. The sequence is that of NH(3)-dependent NAD(+) synthetase from Campylobacter jejuni subsp. jejuni serotype O:23/36 (strain 81-176).